The primary structure comprises 643 residues: Threonine--tRNA ligase (643 aa).

The 65-residue stretch at M1–T65 folds into the TGS domain. The catalytic stretch occupies residues D246 to P537. Positions 337, 388, and 514 each coordinate Zn(2+).

The protein belongs to the class-II aminoacyl-tRNA synthetase family. As to quaternary structure, homodimer. The cofactor is Zn(2+).

It localises to the cytoplasm. It catalyses the reaction tRNA(Thr) + L-threonine + ATP = L-threonyl-tRNA(Thr) + AMP + diphosphate + H(+). Functionally, catalyzes the attachment of threonine to tRNA(Thr) in a two-step reaction: L-threonine is first activated by ATP to form Thr-AMP and then transferred to the acceptor end of tRNA(Thr). Also edits incorrectly charged L-seryl-tRNA(Thr). The chain is Threonine--tRNA ligase from Delftia acidovorans (strain DSM 14801 / SPH-1).